We begin with the raw amino-acid sequence, 401 residues long: Argininosuccinate synthase (401 aa).

9 to 17 (AYSGGLDTS) lines the ATP pocket. Tyrosine 86 contributes to the L-citrulline binding site. Glycine 116 serves as a coordination point for ATP. L-aspartate contacts are provided by threonine 118, asparagine 122, and aspartate 123. Residue asparagine 122 participates in L-citrulline binding. L-citrulline is bound by residues arginine 126, serine 174, serine 183, glutamate 259, and tyrosine 271.

It belongs to the argininosuccinate synthase family. Type 1 subfamily. In terms of assembly, homotetramer.

It is found in the cytoplasm. The enzyme catalyses L-citrulline + L-aspartate + ATP = 2-(N(omega)-L-arginino)succinate + AMP + diphosphate + H(+). It participates in amino-acid biosynthesis; L-arginine biosynthesis; L-arginine from L-ornithine and carbamoyl phosphate: step 2/3. This is Argininosuccinate synthase from Bacillus cereus (strain AH820).